The sequence spans 117 residues: MPKDFSRTLRVADQVQRELASLIQNEIMDPRIGMITLTGVEVTRDYTYAKVFYTTLGGNENAQLAEEGLKRAAGFLRSQLAGKIRLRIIPKLQFVYDESIERGIKLSRLIDEAVGKT.

This sequence belongs to the RbfA family. As to quaternary structure, monomer. Binds 30S ribosomal subunits, but not 50S ribosomal subunits or 70S ribosomes.

The protein localises to the cytoplasm. Its function is as follows. One of several proteins that assist in the late maturation steps of the functional core of the 30S ribosomal subunit. Associates with free 30S ribosomal subunits (but not with 30S subunits that are part of 70S ribosomes or polysomes). Required for efficient processing of 16S rRNA. May interact with the 5'-terminal helix region of 16S rRNA. The sequence is that of Ribosome-binding factor A from Nitrosomonas eutropha (strain DSM 101675 / C91 / Nm57).